We begin with the raw amino-acid sequence, 105 residues long: MNIYDVLIWMALGMTALLIQYGIWRYLKGKGKDTIPLQICGFLANFFFIFALAWGYSSFSEREYQAIGMGFIFFGGTALIPAIITYRLANHPAKKIRESSDSISA.

3 consecutive transmembrane segments (helical) span residues 3-23 (IYDV…QYGI), 35-55 (IPLQ…LAWG), and 66-86 (AIGM…IITY).

The protein belongs to the PceB family.

The protein resides in the cell membrane. May act as a membrane anchor for the tetrachloroethene reductive dehalogenase PceA. This is Probable tetrachloroethene reductive dehalogenase membrane anchor protein from Desulfitobacterium hafniense (Desulfitobacterium frappieri).